A 256-amino-acid chain; its full sequence is Protein CUSTOS (256 aa).

Positions 1 to 19 (MVAPSGAMSDSENSSSSSS) are enriched in low complexity. Disordered regions lie at residues 1–83 (MVAP…TPEF), 127–163 (FTSI…QRCR), and 227–256 (IQKK…KPEN). Serine 62 is modified (phosphoserine). Basic and acidic residues predominate over residues 63-83 (RRHEVNQHEEDGNDLRTTPEF). Position 80 is a phosphothreonine (threonine 80). A Phosphoserine modification is found at serine 139. Positions 228–235 (QKKRKKKA) match the Nucleolar localization signal (NLS) motif. The span at 228-237 (QKKRKKKAKK) shows a compositional bias: basic residues. The span at 246 to 256 (PAECAAAKPEN) shows a compositional bias: low complexity.

It belongs to the CUSTOS family.

It localises to the nucleus envelope. In terms of biological role, plays a role in the regulation of Wnt signaling pathway during early development. The chain is Protein CUSTOS from Mus musculus (Mouse).